The following is a 420-amino-acid chain: Transmembrane protease serine 11B-like protein (420 aa).

The Cytoplasmic portion of the chain corresponds to Met1–Trp19. The helical; Signal-anchor for type II membrane protein transmembrane segment at Met20–Val40 threads the bilayer. The Extracellular segment spans residues His41–Ile420. One can recognise an SEA domain in the interval Lys48–Lys165. N-linked (GlcNAc...) asparagine glycans are attached at residues Asn111 and Asn146. The Peptidase S1 domain occupies Ile189–Gly419. A disulfide bond links Cys214 and Cys230. Residue His229 is the Charge relay system of the active site. Asn239 carries an N-linked (GlcNAc...) asparagine glycan. Asp274 acts as the Charge relay system in catalysis. 2 disulfide bridges follow: Cys339/Cys355 and Cys366/Cys395. Residue Ser370 is the Charge relay system of the active site.

It belongs to the peptidase S1 family.

Its subcellular location is the membrane. The protein resides in the cell membrane. With respect to regulation, inhibited by aprotinin, leupeptin, benzamidine, SERPINA1, SPINT1 and SPINT2. Functionally, serine protease. The protein is Transmembrane protease serine 11B-like protein (Tmprss11bnl) of Rattus norvegicus (Rat).